A 154-amino-acid polypeptide reads, in one-letter code: MSLATLDISQHPNLPASAQTLFKAKADKKLSFEQIAQHIGRNEVAAAALFYGQAKASPEDIVKLSELLDIPTPLLEEQLSGFPDRGRSVEMPPKEPLIYRLYEIVQNYGYAYKAVLNEKFGDGIMSAISFSTKVEKETDQDGNNWAVITLRGKW.

Residues Arg-100, Glu-103, and Ser-126 contribute to the active site.

The protein belongs to the cyanase family.

It carries out the reaction cyanate + hydrogencarbonate + 3 H(+) = NH4(+) + 2 CO2. In terms of biological role, catalyzes the reaction of cyanate with bicarbonate to produce ammonia and carbon dioxide. The polypeptide is Cyanate hydratase (Aspergillus terreus (strain NIH 2624 / FGSC A1156)).